Here is a 343-residue protein sequence, read N- to C-terminus: MAGLKNTPYNAVHWSQLAPEEQIRFWEDYEAGRATTFLVEPERKRTKRRRGEHSTKPKCENPSWYRPERYKALKGQLGHAYNRLVKKDPVTGEQSLRMRMSRHPFYVQKRTFVGRKYAFRPEKQRLLDAIWPVLVSFSDAGTHTVGMSVTRLAEEISPKDSEGHVIPELEVTVSRLSRLLAEQVRFGVLGVSEETMWDREHRQRLPRYVWITPAGWQMLGVDMVKLHEQQQKRLRESEIRQQLIREGVLREDEDISVHAARKRWYLQRSQDALKKRREKAAASKRANRLKKLPVDQQIYEMAEYLRKRLPPDEAYFCSDDHLKRLAIRELRQLELTLAAPPPH.

Residues 42-61 (ERKRTKRRRGEHSTKPKCEN) form a disordered region.

In terms of biological role, probably functions as an initiator for the IncI1 ColIb-P9 replicon. This is Replication initiation protein (repZ) from Escherichia coli.